We begin with the raw amino-acid sequence, 714 residues long: MKITYCDALIIGGGLAGLRASIACKQKGLNTIVLSLVPVRRSHSAAAQGGMQASLANAKKSEGDNEDLHFLDTVKGSDWGCDQQVARMFVTTAPKAIRELASWGVPWTRIKKGDRPAVVNGEHVTITERDDRHGYILSRDFGGTKKWRTCFTADATGHTMLYAVANEALHHKVDIQDRKDMLAFIHHDNKCYGAVVRDLITGEISAYVSKGTLLATGGYGRVYKHTTNAVICDGAGAASALETGVAKLGNMEAVQFHPTALVPSGILMTEGCRGDGGVLRDKFGRRFMPAYEPEKKELASRDVVSRRILEHIQKGYGAKSPYGDHVWLDIAILGRNHVEKNLRDVRDIAMTFAGIDPADSKEQTKDNMQGVPANEPEYGQAMAKQKGWIPIKPMQHYSMGGVRTNPKGETHLKGLFCAGEAACWDLHGFNRLGGNSVSEAVVAGMIIGDYFASHCLEAQIEINTQKVEAFIKESQDYMHFLLHNEGKEDVYEIRERMKEVMDEKVGVFREGKRLEEALKELQELYARSKNICVKNKVLHNNPELEDAYRTKKMLKLALCITQGALLRTESRGAHTRIDYPKRDDEKWLNRTLASWPSAEQDMPTIEYEELDVMKMEISPDFRGYGKKGNFIPHPKKEERDAEILKTILELEKLGKDRIEVQHALMPFELQEKYKARNMRLEDEEVRARGEHLYSFNVHELLDQHNANLKGEHHE.

Residues 13-16 (GGLA), 42-44 (SHS), and 49-50 (GG) contribute to the FAD site. Position 43 is a tele-8alpha-FAD histidine (histidine 43). Residues histidine 257 and arginine 273 contribute to the active site. Residues glutamate 420 and 436-437 (SV) contribute to the FAD site.

It belongs to the FAD-dependent oxidoreductase 2 family. FRD/SDH subfamily. As to quaternary structure, part of an enzyme complex containing three subunits: a flavoprotein (frdA), an iron-sulfur protein (frdB), and diheme cytochrome b (frdC). FAD is required as a cofactor.

It is found in the cell inner membrane. The catalysed reaction is a quinone + succinate = fumarate + a quinol. Functionally, the fumarate reductase enzyme complex is required for fumarate respiration. The sequence is that of Fumarate reductase flavoprotein subunit (frdA) from Helicobacter pylori (strain ATCC 700392 / 26695) (Campylobacter pylori).